The following is a 418-amino-acid chain: Serpin H1 (418 aa).

An N-terminal signal peptide occupies residues 1-18 (MRALLLISTICLLARALA). Residue K94 is modified to N6-succinyllysine. N-linked (GlcNAc...) asparagine glycosylation is found at N120 and N125. S141 is subject to Phosphoserine. K207 bears the N6-acetyllysine mark. K296 carries the post-translational modification N6-succinyllysine. Residue K319 is modified to N6-acetyllysine. The Prevents secretion from ER signature appears at 415 to 418 (RDEL).

The protein belongs to the serpin family.

Its subcellular location is the endoplasmic reticulum lumen. Functionally, binds specifically to collagen. Could be involved as a chaperone in the biosynthetic pathway of collagen. This chain is Serpin H1 (SERPINH1), found in Bos taurus (Bovine).